Consider the following 522-residue polypeptide: Cytochrome P450 4F4 (522 aa).

Helical transmembrane passes span T15–L35 and G87–I107. Residues E328 and C468 each contribute to the heme site.

This sequence belongs to the cytochrome P450 family. Heme serves as cofactor. As to expression, expressed in hepatocytes. High expression in liver and kidney. Lower expression in brain.

It is found in the endoplasmic reticulum membrane. Its subcellular location is the microsome membrane. The catalysed reaction is (5Z,8Z,11Z,14Z)-eicosatetraenoate + reduced [NADPH--hemoprotein reductase] + O2 = 20-hydroxy-(5Z,8Z,11Z,14Z)-eicosatetraenoate + oxidized [NADPH--hemoprotein reductase] + H2O + H(+). The enzyme catalyses leukotriene B4 + reduced [NADPH--hemoprotein reductase] + O2 = 20-hydroxy-leukotriene B4 + oxidized [NADPH--hemoprotein reductase] + H2O + H(+). It catalyses the reaction 6-trans-leukotriene B4 + reduced [NADPH--hemoprotein reductase] + O2 = 20-hydroxy-6-trans-leukotriene B4 + oxidized [NADPH--hemoprotein reductase] + H2O + H(+). It carries out the reaction prostaglandin A1 + reduced [NADPH--hemoprotein reductase] + O2 = 20-hydroxy prostaglandin A1 + oxidized [NADPH--hemoprotein reductase] + H2O + H(+). The catalysed reaction is prostaglandin E1 + reduced [NADPH--hemoprotein reductase] + O2 = 20-hydroxy prostaglandin E1 + oxidized [NADPH--hemoprotein reductase] + H2O + H(+). A cytochrome P450 monooxygenase involved in the metabolism of arachidonic acid and its oxygenated derivatives. Mechanistically, uses molecular oxygen inserting one oxygen atom into a substrate, and reducing the second into a water molecule, with two electrons provided by NADPH via cytochrome P450 reductase (CPR; NADPH-ferrihemoprotein reductase). Participates in the conversion of arachidonic acid to omega-hydroxyeicosatetraenoic acid (20-HETE), a signaling molecule acting both as vasoconstrictive and natriuretic with overall effect on arterial blood pressure. Hydroxylates the terminal carbon (omega-hydroxylation) of inflammatory lipid mediators, including prostaglandin (PG) A1, PGE1 and leukotriene B4 (LTB4), and may play a role in inactivation of these oxylipins during the resolution of inflammation. In Rattus norvegicus (Rat), this protein is Cytochrome P450 4F4.